The primary structure comprises 226 residues: Endonuclease V (226 aa).

The Mg(2+) site is built by D42 and D110.

The protein belongs to the endonuclease V family. It depends on Mg(2+) as a cofactor.

The protein localises to the cytoplasm. The catalysed reaction is Endonucleolytic cleavage at apurinic or apyrimidinic sites to products with a 5'-phosphate.. In terms of biological role, DNA repair enzyme involved in the repair of deaminated bases. Selectively cleaves double-stranded DNA at the second phosphodiester bond 3' to a deoxyinosine leaving behind the intact lesion on the nicked DNA. This Thermus thermophilus (strain ATCC BAA-163 / DSM 7039 / HB27) protein is Endonuclease V.